Here is a 126-residue protein sequence, read N- to C-terminus: Probable flagellum biosynthesis repressor protein FlbT (126 aa).

Belongs to the FlbT family.

Has a post-transcriptional repressor function in flagellum biogenesis. Associates with the 5'-UTR of fljK mRNA and promotes its degradation. This is Probable flagellum biosynthesis repressor protein FlbT from Rhodopseudomonas palustris (strain ATCC BAA-98 / CGA009).